Consider the following 125-residue polypeptide: UPF0231 protein in hemN 3'region (125 aa).

Belongs to the UPF0231 family.

The protein is UPF0231 protein in hemN 3'region of Mannheimia haemolytica (Pasteurella haemolytica).